A 1149-amino-acid polypeptide reads, in one-letter code: Beta-alanine-activating enzyme (1149 aa).

Residues 178-186 (TSGTTGLPK), aspartate 408, arginine 422, and lysine 543 contribute to the ATP site. The Carrier domain maps to 570-646 (ASVRLKLQNL…DLLSHIMTET (77 aa)). Serine 605 bears the O-(pantetheine 4'-phosphoryl)serine mark. A disordered region spans residues 653 to 683 (PSKKRTADYSDSEASGKRQHKEMTTSSDTES).

Belongs to the ATP-dependent AMP-binding enzyme family.

Its function is as follows. Covalently binds beta-alanine in an ATP-dependent manner to form a thioester bond with its phosphopantetheine group and transfers it to an, as yet, unknown acceptor. May be required for a post-translational protein modification or for post-transcriptional modification of an RNA. This is Beta-alanine-activating enzyme (aasdh) from Danio rerio (Zebrafish).